The primary structure comprises 605 residues: DNA primase (605 aa).

The CHC2-type zinc-finger motif lies at 39–63 (CPFHHERTPSFHVVPDKKMYYCFGC). A Toprim domain is found at 257-338 (RAAIICEGYM…EVRIVELNGG (82 aa)). Glu263, Asp307, and Asp309 together coordinate Mg(2+).

It belongs to the DnaG primase family. As to quaternary structure, monomer. Interacts with DnaB. Zn(2+) is required as a cofactor. The cofactor is Mg(2+).

The enzyme catalyses ssDNA + n NTP = ssDNA/pppN(pN)n-1 hybrid + (n-1) diphosphate.. Functionally, RNA polymerase that catalyzes the synthesis of short RNA molecules used as primers for DNA polymerase during DNA replication. The sequence is that of DNA primase from Treponema pallidum (strain Nichols).